The chain runs to 453 residues: Cysteine--tRNA ligase (453 aa).

A Zn(2+)-binding site is contributed by Cys-31. The short motif at 33-43 is the 'HIGH' region element; it reads PTVYDNPHIGN. The Zn(2+) site is built by Cys-213, His-238, and Glu-242. The 'KMSKS' region motif lies at 271 to 275; it reads KMAKS. Lys-274 is an ATP binding site.

The protein belongs to the class-I aminoacyl-tRNA synthetase family. Monomer. Zn(2+) is required as a cofactor.

Its subcellular location is the cytoplasm. The catalysed reaction is tRNA(Cys) + L-cysteine + ATP = L-cysteinyl-tRNA(Cys) + AMP + diphosphate. The chain is Cysteine--tRNA ligase from Pelagibacter ubique (strain HTCC1062).